Here is a 262-residue protein sequence, read N- to C-terminus: Nodulation protein J (262 aa).

One can recognise an ABC transmembrane type-2 domain in the interval 33 to 259; the sequence is ASILGNLADP…FLSTALLRRR (227 aa). The next 7 membrane-spanning stretches (helical) occupy residues 35-55, 62-82, 102-122, 127-147, 148-168, 177-197, and 231-251; these read ILGN…GLGM, GVSY…MTAS, AILH…AWAA, LAGT…WVSL, LYAL…AMIV, YFIF…GAVF, and LVHV…PFFL.

Belongs to the ABC-2 integral membrane protein family. Lipooligosaccharide exporter (TC 3.A.1.102) subfamily. As to quaternary structure, the complex is composed of two ATP-binding proteins (NodI) and two transmembrane proteins (NodJ).

Its subcellular location is the cell inner membrane. Its function is as follows. Part of the ABC transporter complex NodIJ involved in the export of the nodulation factors (Nod factors), the bacterial signal molecules that induce symbiosis and subsequent nodulation induction. Nod factors are LCO (lipo-chitin oligosaccharide), a modified beta-1,4-linked N-acetylglucosamine oligosaccharide. This subunit encodes the transporter. This Rhizobium meliloti (strain 1021) (Ensifer meliloti) protein is Nodulation protein J (nodJ).